We begin with the raw amino-acid sequence, 391 residues long: MHVFWFIPTHGDSRYLGTSEGARAVHYDYLRQVATAADTLGYEGVLIPTGRSCEDPWVVASALAPVTRRLKFLVAVRPGLHQPALAARMAATFDRLSGGRLLINLVTGGDRTELEGDGVFLDHAQRYAQSEEFIRIWREILSRSHEGGTFDYEGEHLSVKGAKLLYPPVQKPYPPVYFGGSSEAAHDLAAEQVDTYLTWGEPPAAVAQKVADVRARAAQRGRTVRFGIRLHVIVRETDAAAWAAAEELISRVQDETVAQAQAVFSRMDSEGQRRMAALHAGGTRRSRADLEISPNLWAGVGLVRGGAGTALVGDPQTVAARMQEYADLGIDTFVLSGYPHLEEAYRFAELVFPLLPAEVRERIGGGRAAGPLTGPFGEIVGNQYVPRAAQS.

This sequence belongs to the SsuD family.

It carries out the reaction an alkanesulfonate + FMNH2 + O2 = an aldehyde + FMN + sulfite + H2O + 2 H(+). In terms of biological role, catalyzes the desulfonation of aliphatic sulfonates. This Paracidovorax citrulli (strain AAC00-1) (Acidovorax citrulli) protein is Alkanesulfonate monooxygenase.